Reading from the N-terminus, the 294-residue chain is 4-hydroxy-tetrahydrodipicolinate synthase (294 aa).

T47 provides a ligand contact to pyruvate. Y135 (proton donor/acceptor) is an active-site residue. K163 (schiff-base intermediate with substrate) is an active-site residue. V205 is a binding site for pyruvate.

Belongs to the DapA family. In terms of assembly, homotetramer; dimer of dimers.

It is found in the cytoplasm. It catalyses the reaction L-aspartate 4-semialdehyde + pyruvate = (2S,4S)-4-hydroxy-2,3,4,5-tetrahydrodipicolinate + H2O + H(+). Its pathway is amino-acid biosynthesis; L-lysine biosynthesis via DAP pathway; (S)-tetrahydrodipicolinate from L-aspartate: step 3/4. Functionally, catalyzes the condensation of (S)-aspartate-beta-semialdehyde [(S)-ASA] and pyruvate to 4-hydroxy-tetrahydrodipicolinate (HTPA). The polypeptide is 4-hydroxy-tetrahydrodipicolinate synthase (Rickettsia canadensis (strain McKiel)).